Consider the following 220-residue polypeptide: Deoxyribose-phosphate aldolase (220 aa).

Aspartate 89 (proton donor/acceptor) is an active-site residue. The active-site Schiff-base intermediate with acetaldehyde is lysine 151. Lysine 180 acts as the Proton donor/acceptor in catalysis.

It belongs to the DeoC/FbaB aldolase family. DeoC type 1 subfamily.

The protein resides in the cytoplasm. The catalysed reaction is 2-deoxy-D-ribose 5-phosphate = D-glyceraldehyde 3-phosphate + acetaldehyde. It participates in carbohydrate degradation; 2-deoxy-D-ribose 1-phosphate degradation; D-glyceraldehyde 3-phosphate and acetaldehyde from 2-deoxy-alpha-D-ribose 1-phosphate: step 2/2. In terms of biological role, catalyzes a reversible aldol reaction between acetaldehyde and D-glyceraldehyde 3-phosphate to generate 2-deoxy-D-ribose 5-phosphate. In Thermus thermophilus (strain ATCC BAA-163 / DSM 7039 / HB27), this protein is Deoxyribose-phosphate aldolase.